Here is a 357-residue protein sequence, read N- to C-terminus: MSKSGKNGLTYSDAGVDIDAGNLLVEKIKPAVRSTRRPGADGEIGGFGGLFDLKAAGFTDPILVAANDGVGTKLKIAIDAGLHDTVGIDLVAMCVNDLVVQGAEPLLFLDYYATGKLDPNQGAAIVGGIAAGCREAGCALIGGETAEMPGMYSGGDYDLAGFAVGAAERGQLLPAGDIAEGDVILGLASSGVHSNGFSLVRKIVELAGLGWDAPAPFAEGATLGAALLTPTRIYVKPLLKAIRETKALKALAHITGGGFPENIPRVLPKHLAAEIDLASITVPTVFSWLSKTGGVAQNEMLRTFNCGVGMIVVVAAENADAVAAALEAEGETVARLGRMISREEGAPGTVYKGTLGL.

The protein belongs to the AIR synthase family.

The protein localises to the cytoplasm. It carries out the reaction 2-formamido-N(1)-(5-O-phospho-beta-D-ribosyl)acetamidine + ATP = 5-amino-1-(5-phospho-beta-D-ribosyl)imidazole + ADP + phosphate + H(+). Its pathway is purine metabolism; IMP biosynthesis via de novo pathway; 5-amino-1-(5-phospho-D-ribosyl)imidazole from N(2)-formyl-N(1)-(5-phospho-D-ribosyl)glycinamide: step 2/2. This Allorhizobium ampelinum (strain ATCC BAA-846 / DSM 112012 / S4) (Agrobacterium vitis (strain S4)) protein is Phosphoribosylformylglycinamidine cyclo-ligase.